Here is a 194-residue protein sequence, read N- to C-terminus: Potassium-transporting ATPase KdpC subunit (194 aa).

A helical transmembrane segment spans residues 12 to 34 (LFLLLLTGGVYPLLTTALGQWWF).

Belongs to the KdpC family. In terms of assembly, the system is composed of three essential subunits: KdpA, KdpB and KdpC.

It is found in the cell inner membrane. In terms of biological role, part of the high-affinity ATP-driven potassium transport (or Kdp) system, which catalyzes the hydrolysis of ATP coupled with the electrogenic transport of potassium into the cytoplasm. This subunit acts as a catalytic chaperone that increases the ATP-binding affinity of the ATP-hydrolyzing subunit KdpB by the formation of a transient KdpB/KdpC/ATP ternary complex. This Salmonella enteritidis PT4 (strain P125109) protein is Potassium-transporting ATPase KdpC subunit.